Here is a 457-residue protein sequence, read N- to C-terminus: MFTIKKLTLTIVVATTLTGCANIGDSYRASLKNYKQYEEITKQYNIKNDWWKLYKDAQLNRVVEKALLNNKDLAKATISVNRALYSANLAGANLVPAFSGSTRSTAQKNIKTGGNSTISHTGSLNVSYTLDLWFRLADTADAAEWAHKATVQDMESTKLSLINSVVTTYYQIAYLNDAISTTKESIKYYTDISNIMRNRLAQGVADSISVDQAQQAVLTARNNLITYQLNRKTAEQTLRNLLNLKPDETLKITFPHILKVKSVGVNLNVPVSVIANRPDIKGYQARLSSAFKNVKATEKSWFPEITLGGSLNSSGKKLNSATNTLIGGGALGISLPFLNWNTVKWNVKISEADYETARLNYEKSITVALNDVDTNYFSFTQAKKRFTNAQKTYIYNQRITQYYRNRYNAGVSELREWLTAANTEKNSQLSILQAKYNVIQAENAVYSSMAGYYSVKK.

The N-terminal stretch at Met-1–Ile-23 is a signal peptide.

This sequence belongs to the outer membrane factor (OMF) (TC 1.B.17) family. As to quaternary structure, homotrimer. Probably part of a complex composed of LtxB, LtxD and TdeA, which forms a single transport channel across the two membranes.

It localises to the cell outer membrane. Required for secretion of the LtxA leukotoxin and resistance to various antimicrobial compounds. In Aggregatibacter actinomycetemcomitans (Actinobacillus actinomycetemcomitans), this protein is Toxin and drug export protein A.